A 269-amino-acid polypeptide reads, in one-letter code: uncharacterized protein (269 aa).

The protein belongs to the methyltransferase superfamily.

This is an uncharacterized protein from Mycobacterium leprae (strain Br4923).